Here is a 246-residue protein sequence, read N- to C-terminus: uncharacterized protein (246 aa).

This is an uncharacterized protein from Borreliella burgdorferi (strain ATCC 35210 / DSM 4680 / CIP 102532 / B31) (Borrelia burgdorferi).